The following is a 316-amino-acid chain: Putative metal-binding protein TP_0034 (316 aa).

Positions 1 to 19 (MQRCSVVAALAGVVFLAQA) are cleaved as a signal peptide. Positions 68, 146, and 210 each coordinate a divalent metal cation.

The protein belongs to the bacterial solute-binding protein 9 family.

The protein localises to the periplasm. Functionally, part of an ATP-binding cassette (ABC) transport system involved in metal import. Binds a metal with high affinity and specificity and delivers it to the membrane permease for translocation into the cytoplasm. In Treponema pallidum (strain Nichols), this protein is Putative metal-binding protein TP_0034.